An 83-amino-acid chain; its full sequence is Mu-theraphotoxin-Hhn2f (83 aa).

An N-terminal signal peptide occupies residues 1-21; the sequence is MKASMFLALAGLVLLFVVGYA. Positions 22 to 48 are excised as a propeptide; it reads SESEEKEFPIELLSKIFAVDVFKGEER. Cystine bridges form between C50–C65, C57–C70, and C64–C77. L81 is subject to Leucine amide.

The protein belongs to the neurotoxin 10 (Hwtx-1) family. 15 (Hntx-3) subfamily. Monomer. Expressed by the venom gland.

Its subcellular location is the secreted. Its function is as follows. Lethal neurotoxin. Selectively blocks tetrodotoxin-sensitive voltage-gated sodium channels (Nav). Does not affect tetrodotoxin-resistant voltage-gated sodium channels or calcium channels. The polypeptide is Mu-theraphotoxin-Hhn2f (Cyriopagopus hainanus (Chinese bird spider)).